The following is a 354-amino-acid chain: Glycine betaine/proline betaine transport system permease protein ProW (354 aa).

The tract at residues Met1–Ala28 is disordered. The Cytoplasmic portion of the chain corresponds to Met1–Gln99. Low complexity predominate over residues Asp9–Ala23. The helical transmembrane segment at Leu100 to Val120 threads the bilayer. A topological domain (periplasmic) is located at residue Ser121. The chain crosses the membrane as a helical span at residues Gly122–Trp142. The Cytoplasmic portion of the chain corresponds to Ser143–Thr148. In terms of domain architecture, ABC transmembrane type-1 spans Ala145–Thr324. The chain crosses the membrane as a helical span at residues Leu149–Trp169. Topologically, residues Leu170 to Pro198 are periplasmic. A helical membrane pass occupies residues Ile199–Leu219. At Pro220 to Gln270 the chain is on the cytoplasmic side. The helical transmembrane segment at Thr271–Gly291 threads the bilayer. The Periplasmic segment spans residues Gln292–Arg300. Residues Leu301 to Asp321 form a helical membrane-spanning segment. Residues Arg322–Lys354 lie on the Cytoplasmic side of the membrane.

It belongs to the binding-protein-dependent transport system permease family. CysTW subfamily. As to quaternary structure, the complex is composed of two ATP-binding proteins (ProV), two transmembrane proteins (ProW) and a solute-binding protein (ProX).

Its subcellular location is the cell inner membrane. In terms of biological role, part of the ProU ABC transporter complex involved in glycine betaine and proline betaine uptake. Probably responsible for the translocation of the substrate across the membrane. This Salmonella typhimurium (strain LT2 / SGSC1412 / ATCC 700720) protein is Glycine betaine/proline betaine transport system permease protein ProW.